Reading from the N-terminus, the 426-residue chain is Serine--tRNA ligase (426 aa).

230–232 (TSE) contributes to the L-serine binding site. Position 261–263 (261–263 (RSE)) interacts with ATP. Residue glutamate 284 coordinates L-serine. 348–351 (EISS) serves as a coordination point for ATP. Serine 384 provides a ligand contact to L-serine.

Belongs to the class-II aminoacyl-tRNA synthetase family. Type-1 seryl-tRNA synthetase subfamily. In terms of assembly, homodimer. The tRNA molecule binds across the dimer.

The protein resides in the cytoplasm. It carries out the reaction tRNA(Ser) + L-serine + ATP = L-seryl-tRNA(Ser) + AMP + diphosphate + H(+). It catalyses the reaction tRNA(Sec) + L-serine + ATP = L-seryl-tRNA(Sec) + AMP + diphosphate + H(+). Its pathway is aminoacyl-tRNA biosynthesis; selenocysteinyl-tRNA(Sec) biosynthesis; L-seryl-tRNA(Sec) from L-serine and tRNA(Sec): step 1/1. Catalyzes the attachment of serine to tRNA(Ser). Is also able to aminoacylate tRNA(Sec) with serine, to form the misacylated tRNA L-seryl-tRNA(Sec), which will be further converted into selenocysteinyl-tRNA(Sec). In Sphingopyxis alaskensis (strain DSM 13593 / LMG 18877 / RB2256) (Sphingomonas alaskensis), this protein is Serine--tRNA ligase.